The following is a 476-amino-acid chain: Aspartyl/glutamyl-tRNA(Asn/Gln) amidotransferase subunit B (476 aa).

It belongs to the GatB/GatE family. GatB subfamily. As to quaternary structure, heterotrimer of A, B and C subunits.

The catalysed reaction is L-glutamyl-tRNA(Gln) + L-glutamine + ATP + H2O = L-glutaminyl-tRNA(Gln) + L-glutamate + ADP + phosphate + H(+). It catalyses the reaction L-aspartyl-tRNA(Asn) + L-glutamine + ATP + H2O = L-asparaginyl-tRNA(Asn) + L-glutamate + ADP + phosphate + 2 H(+). Functionally, allows the formation of correctly charged Asn-tRNA(Asn) or Gln-tRNA(Gln) through the transamidation of misacylated Asp-tRNA(Asn) or Glu-tRNA(Gln) in organisms which lack either or both of asparaginyl-tRNA or glutaminyl-tRNA synthetases. The reaction takes place in the presence of glutamine and ATP through an activated phospho-Asp-tRNA(Asn) or phospho-Glu-tRNA(Gln). The polypeptide is Aspartyl/glutamyl-tRNA(Asn/Gln) amidotransferase subunit B (Variovorax paradoxus (strain S110)).